Consider the following 217-residue polypeptide: Deoxyribose-phosphate aldolase (217 aa).

The Proton donor/acceptor role is filled by Asp-89. The active-site Schiff-base intermediate with acetaldehyde is Lys-151. Residue Lys-180 is the Proton donor/acceptor of the active site.

This sequence belongs to the DeoC/FbaB aldolase family. DeoC type 1 subfamily.

The protein localises to the cytoplasm. The enzyme catalyses 2-deoxy-D-ribose 5-phosphate = D-glyceraldehyde 3-phosphate + acetaldehyde. Its pathway is carbohydrate degradation; 2-deoxy-D-ribose 1-phosphate degradation; D-glyceraldehyde 3-phosphate and acetaldehyde from 2-deoxy-alpha-D-ribose 1-phosphate: step 2/2. Its function is as follows. Catalyzes a reversible aldol reaction between acetaldehyde and D-glyceraldehyde 3-phosphate to generate 2-deoxy-D-ribose 5-phosphate. This is Deoxyribose-phosphate aldolase from Mycoplasma mobile (strain ATCC 43663 / 163K / NCTC 11711) (Mesomycoplasma mobile).